The sequence spans 254 residues: Adenosine 5'-phosphosulfate reductase (254 aa).

[4Fe-4S] cluster-binding residues include Cys-140, Cys-141, Cys-223, and Cys-226. The active-site Nucleophile; cysteine thiosulfonate intermediate is Cys-249.

It belongs to the PAPS reductase family. CysH subfamily. It depends on [4Fe-4S] cluster as a cofactor.

It is found in the cytoplasm. It catalyses the reaction [thioredoxin]-disulfide + sulfite + AMP + 2 H(+) = adenosine 5'-phosphosulfate + [thioredoxin]-dithiol. It participates in sulfur metabolism; hydrogen sulfide biosynthesis; sulfite from sulfate. Functionally, catalyzes the formation of sulfite from adenosine 5'-phosphosulfate (APS) using thioredoxin as an electron donor. The protein is Adenosine 5'-phosphosulfate reductase of Mycobacterium bovis (strain ATCC BAA-935 / AF2122/97).